We begin with the raw amino-acid sequence, 1033 residues long: SIT4-associating protein SAP190 (1033 aa).

3 disordered regions span residues 32 to 82 (DQDD…TTES), 147 to 213 (PEII…QVET), and 768 to 1033 (FGND…KEAF). Basic and acidic residues predominate over residues 158-170 (ILIERDRKDKKED). Positions 171-182 (AEEGGDSEETTN) are enriched in acidic residues. Residues 183–195 (DSDHDSGDERSVD) are compositionally biased toward basic and acidic residues. The residue at position 774 (serine 774) is a Phosphoserine. 2 stretches are compositionally biased toward acidic residues: residues 784–793 (SEDIIGDTEG) and 825–838 (ENEE…EYSD). Residues serine 857, serine 862, and serine 892 each carry the phosphoserine modification. Basic and acidic residues predominate over residues 858-879 (DDGKSKSAESEFTDKISEHRDG). Positions 909–924 (SRSQPSDPKLQDQNIF) are enriched in polar residues. Acidic residues predominate over residues 932–944 (GVGDDDDYMDPND). Residue threonine 990 is modified to Phosphothreonine. Serine 991 carries the post-translational modification Phosphoserine. Over residues 1000-1018 (ISSDEEDSEDEDEENDMGN) the composition is skewed to acidic residues.

The protein belongs to the SAPS family. As to quaternary structure, associates with the SIT4 protein phosphatase catalytic subunit in a cell-cycle-dependent manner. Hyperphosphorylated in the absence of SIT4.

It is found in the cytoplasm. In terms of biological role, positive regulator of protein phosphatase SIT4. Involved in the general amino acid control (GAAC) response regulated by TOR. Involved in the dephosphorylation of the elongator complex subunit IKI3. The protein is SIT4-associating protein SAP190 (SAP190) of Saccharomyces cerevisiae (strain ATCC 204508 / S288c) (Baker's yeast).